The primary structure comprises 370 residues: Coproporphyrin III ferrochelatase (370 aa).

Positions 58 and 127 each coordinate Fe-coproporphyrin III. Fe(2+)-binding residues include His189 and Glu276.

It belongs to the ferrochelatase family.

It localises to the cytoplasm. It carries out the reaction Fe-coproporphyrin III + 2 H(+) = coproporphyrin III + Fe(2+). The protein operates within porphyrin-containing compound metabolism; protoheme biosynthesis. Its function is as follows. Involved in coproporphyrin-dependent heme b biosynthesis. Catalyzes the insertion of ferrous iron into coproporphyrin III to form Fe-coproporphyrin III. This Corynebacterium glutamicum (strain R) protein is Coproporphyrin III ferrochelatase.